Reading from the N-terminus, the 165-residue chain is MTDALEQSVLALEGTVSVLKDSVESLKCANEPSTNLASTMLQTKRVFRLVPEYDVERSKLDLIEEVEPLVRTLGDKLRKSMGRMQRELDTLQQTYELNDLRLKKNISMDDDDALNSPDMGQEYEGRDADDVVMMASSTNEELEELKKLKEKKKQLENKLEILKQK.

Residues 74-104 adopt a coiled-coil conformation; that stretch reads GDKLRKSMGRMQRELDTLQQTYELNDLRLKK. Phosphoserine occurs at positions 107 and 116. Residues 132–165 are a coiled coil; it reads VMMASSTNEELEELKKLKEKKKQLENKLEILKQK.

Belongs to the DASH complex SPC19 family. In terms of assembly, component of the DASH complex consisting of ASK1, DAD1, DAD2, DAD3, DAD4, DAM1, DUO1, HSK3, SPC19 and SPC34, with a stoichiometry of one copy of each subunit per complex. Multiple DASH complexes oligomerize to form a ring that encircles spindle microtubules and organizes the rod-like NDC80 complexes of the outer kinetochore. DASH complex oligomerization strengthens microtubule attachments. On cytoplasmic microtubules, DASH complexes appear to form patches instead of rings.

Its subcellular location is the nucleus. It localises to the cytoplasm. The protein localises to the cytoskeleton. It is found in the spindle. The protein resides in the chromosome. Its subcellular location is the centromere. It localises to the kinetochore. Functionally, component of the DASH complex that connects microtubules with kinetochores and couples microtubule depolymerisation to chromosome movement; it is involved in retrieving kinetochores to the spindle poles before their re-orientation on the spindle in early mitosis and allows microtubule depolymerization to pull chromosomes apart and resist detachment during anaphase. Kinetochores, consisting of a centromere-associated inner segment and a microtubule-contacting outer segment, play a crucial role in chromosome segregation by mediating the physical connection between centromeric DNA and microtubules. Kinetochores also serve as an input point for the spindle assembly checkpoint, which delays anaphase until all chromosomes have bioriented on the mitotic spindle. During spindle-kinetochore attachment, kinetochores first attach to the lateral surface of spindle microtubules, which supports the congression of chromosomes toward the middle of the dividing cell; they then slide along towards the spindle pole, a process independent of the DASH complex but requiring the NDC80 complex. When the end of a disassembling microtubule reaches the laterally attached kinetochore, the DASH complex together with the NDC80 complex and STU2 convert lateral attachment to end-on capture to produce a structure that can track with microtubule shortening and sustain attachment when tension is applied across sister kinetochores upon their biorientation. Microtubule depolymerization proceeds by protofilament splaying and induces the kinetochore-attached DASH complex to slide longitudinally, thereby helping to transduce depolymerization energy into pulling forces to disjoin chromatids. Incorrect microtubule attachments are corrected by releasing microubules from the kinetochore through phosphorylation by IPL1 of kinetochore components. Links the microtubule cytoskeleton to chromosomes during interphase. Also contributes to the poleward transport of kinetochores on microtubules following centromeric DNA replication in S-phase. This is DASH complex subunit SPC19 (SPC19) from Saccharomyces cerevisiae (strain ATCC 204508 / S288c) (Baker's yeast).